Reading from the N-terminus, the 228-residue chain is Ankyrin repeat domain-containing protein 46 (228 aa).

4 ANK repeats span residues 11–40 (QTNV…DPNI), 44–74 (RGRT…PLAT), 77–103 (QGNT…KIDI), and 107–138 (QGAT…EVKG). Residues 195–215 (VLLLILVIALLSLGIAYYVSG) form a helical membrane-spanning segment.

The protein resides in the membrane. The sequence is that of Ankyrin repeat domain-containing protein 46 (Ankrd46) from Mus musculus (Mouse).